The primary structure comprises 357 residues: DNA replication and repair protein RecF (357 aa).

An ATP-binding site is contributed by 30-37; it reads GANGSGKT.

The protein belongs to the RecF family.

The protein resides in the cytoplasm. In terms of biological role, the RecF protein is involved in DNA metabolism; it is required for DNA replication and normal SOS inducibility. RecF binds preferentially to single-stranded, linear DNA. It also seems to bind ATP. This chain is DNA replication and repair protein RecF, found in Shigella dysenteriae serotype 1 (strain Sd197).